Consider the following 357-residue polypeptide: Glutamine synthetase cytosolic isozyme 1-2 (357 aa).

A GS beta-grasp domain is found at 19-99 (IIAEYIWVGG…VMCDCYTPQG (81 aa)). The 252-residue stretch at 106 to 357 (KRHSAAKIFS…AETTLLWKQN (252 aa)) folds into the GS catalytic domain.

The protein belongs to the glutamine synthetase family. Homooctamer. As to expression, expressed in roots and at lower levels in leaf blades and spikelets (rice flower).

It localises to the cytoplasm. The catalysed reaction is L-glutamate + NH4(+) + ATP = L-glutamine + ADP + phosphate + H(+). In terms of biological role, high-affinity glutamine synthetase involved in ammonium assimilation. Plays an important role in the primary assimilation of ammonium taken up by roots. Plays a role in maintaining nitrogen metabolic balance during ammonium assimilation, thus controlling plant growth and development. Reassimilates ammonium generated during lignification within developing tillers, which is probably required for the outgrowth of axillary buds. Required for nitrogen-dependent biosynthesis of cytokinin. Active cytokinin in axillary bud meristem is required for axillary bud outgrowth and necessary for tillering. In Oryza sativa subsp. japonica (Rice), this protein is Glutamine synthetase cytosolic isozyme 1-2.